We begin with the raw amino-acid sequence, 182 residues long: ATP synthase subunit delta (182 aa).

The protein belongs to the ATPase delta chain family. In terms of assembly, F-type ATPases have 2 components, F(1) - the catalytic core - and F(0) - the membrane proton channel. F(1) has five subunits: alpha(3), beta(3), gamma(1), delta(1), epsilon(1). F(0) has three main subunits: a(1), b(2) and c(10-14). The alpha and beta chains form an alternating ring which encloses part of the gamma chain. F(1) is attached to F(0) by a central stalk formed by the gamma and epsilon chains, while a peripheral stalk is formed by the delta and b chains.

It localises to the cell inner membrane. F(1)F(0) ATP synthase produces ATP from ADP in the presence of a proton or sodium gradient. F-type ATPases consist of two structural domains, F(1) containing the extramembraneous catalytic core and F(0) containing the membrane proton channel, linked together by a central stalk and a peripheral stalk. During catalysis, ATP synthesis in the catalytic domain of F(1) is coupled via a rotary mechanism of the central stalk subunits to proton translocation. In terms of biological role, this protein is part of the stalk that links CF(0) to CF(1). It either transmits conformational changes from CF(0) to CF(1) or is implicated in proton conduction. In Sulfurihydrogenibium sp. (strain YO3AOP1), this protein is ATP synthase subunit delta.